The sequence spans 147 residues: Protein MioC homolog (147 aa).

The Flavodoxin-like domain occupies 5–144; the sequence is ICIITGSTLG…TAEQWLPQFL (140 aa).

It belongs to the flavodoxin family. MioC subfamily. The cofactor is FMN.

Its function is as follows. Probable electron transporter required for biotin synthase activity. The protein is Protein MioC homolog (mioC) of Pasteurella multocida (strain Pm70).